Here is a 430-residue protein sequence, read N- to C-terminus: DNA polymerase IV 1 (430 aa).

In terms of domain architecture, UmuC spans 45-225 (LAHIDCDAFY…KPVTLIWGVG (181 aa)). D49 and D142 together coordinate Mg(2+). E143 is a catalytic residue.

It belongs to the DNA polymerase type-Y family. Monomer. The cofactor is Mg(2+).

It is found in the cytoplasm. The enzyme catalyses DNA(n) + a 2'-deoxyribonucleoside 5'-triphosphate = DNA(n+1) + diphosphate. Its function is as follows. Poorly processive, error-prone DNA polymerase involved in untargeted mutagenesis. Copies undamaged DNA at stalled replication forks, which arise in vivo from mismatched or misaligned primer ends. These misaligned primers can be extended by PolIV. Exhibits no 3'-5' exonuclease (proofreading) activity. May be involved in translesional synthesis, in conjunction with the beta clamp from PolIII. The protein is DNA polymerase IV 1 (dinB1) of Rhizobium meliloti (strain 1021) (Ensifer meliloti).